Reading from the N-terminus, the 574-residue chain is Phospholipase B-like protein A (574 aa).

The first 20 residues, 1–20 (MRVIRSLLLLTIAIIGSVLS), serve as a signal peptide directing secretion. N-linked (GlcNAc...) asparagine glycosylation is found at N159, N195, and N415.

The protein belongs to the phospholipase B-like family.

It is found in the secreted. Phospholipase that removes both fatty-acid chains from phosphatidylcholine and produces the water-soluble glycerophosphorylcholine. In addition to phosphatidylcholine deacylation, it also hydrolyzes phosphatidylinositol and phosphatidylethanolamine. In Dictyostelium discoideum (Social amoeba), this protein is Phospholipase B-like protein A (plbA).